Consider the following 196-residue polypeptide: tRNA(Phe) 7-((3-amino-3-carboxypropyl)-4-demethylwyosine(37)-N(4))-methyltransferase 1 (196 aa).

It belongs to the TYW3 family.

The enzyme catalyses 4-demethyl-7-[(3S)-3-amino-3-carboxypropyl]wyosine(37) in tRNA(Phe) + S-adenosyl-L-methionine = 7-[(3S)-3-amino-3-carboxypropyl]wyosine(37) in tRNA(Phe) + S-adenosyl-L-homocysteine + H(+). S-adenosyl-L-methionine-dependent methyltransferase that acts as a component of the wyosine derivatives biosynthesis pathway. Probably methylates N-4 position of wybutosine-86 to produce wybutosine-72. The sequence is that of tRNA(Phe) 7-((3-amino-3-carboxypropyl)-4-demethylwyosine(37)-N(4))-methyltransferase 1 from Pyrococcus horikoshii (strain ATCC 700860 / DSM 12428 / JCM 9974 / NBRC 100139 / OT-3).